The following is a 263-amino-acid chain: MKLKSFGVFGNPIKHSKSPLIHNACFLTFQKELGFLGHYHPILLPLESRIKNEFLHLGLSGANVTLPFKERAFQICDKIKGIALECGAVNTLVLEDDELVGYNTDALGFWLSLGGEDYQSALILGSGGSAKALACELKKQGLKVSVLNRSSRGLDFFQRLGCDCFMDPPKSAFDLIINATSASLNHELPLNKEVLKGYFKEGQLAYDLAYGFLTPFLSLAKELETPFQDGKGMLIYQASLSFEKFSASQIPYPKVFEVMRSVF.

Shikimate is bound by residues S16–S18 and T65. Catalysis depends on K69, which acts as the Proton acceptor. Residues N90 and D105 each coordinate shikimate. NADP(+) contacts are provided by residues G125–S129 and L208. Shikimate is bound at residue Y210. G230 is an NADP(+) binding site.

The protein belongs to the shikimate dehydrogenase family. As to quaternary structure, homodimer.

It carries out the reaction shikimate + NADP(+) = 3-dehydroshikimate + NADPH + H(+). It participates in metabolic intermediate biosynthesis; chorismate biosynthesis; chorismate from D-erythrose 4-phosphate and phosphoenolpyruvate: step 4/7. Its function is as follows. Involved in the biosynthesis of the chorismate, which leads to the biosynthesis of aromatic amino acids. Catalyzes the reversible NADPH linked reduction of 3-dehydroshikimate (DHSA) to yield shikimate (SA). This chain is Shikimate dehydrogenase (NADP(+)), found in Helicobacter pylori (strain G27).